The sequence spans 1031 residues: LRR receptor-like serine/threonine-protein kinase EFR (1031 aa).

An N-terminal signal peptide occupies residues 1 to 24 (MKLSFSLVFNALTLLLQVCIFAQA). Over 25–653 (RFSNETDMQA…LSVRKKVVSG (629 aa)) the chain is Extracellular. Residues asparagine 28, asparagine 55, and asparagine 95 are each glycosylated (N-linked (GlcNAc...) asparagine). LRR repeat units follow at residues 98 to 120 (FLRL…VGRL), 122 to 144 (RLQY…LSNC), 146 to 168 (RLST…LGSL), 170 to 193 (KLAI…GNLT), 194 to 216 (SLQK…VARL), 218 to 240 (QMVF…LYNI), 242 to 264 (SLES…FGYL), 267 to 289 (NLRR…LANI), 291 to 312 (SLER…SFGK), and 315 to 335 (NLWW…SGLE). Residues asparagine 127 and asparagine 143 are each glycosylated (N-linked (GlcNAc...) asparagine). Asparagine 180 and asparagine 191 each carry an N-linked (GlcNAc...) asparagine glycan. Asparagine 239 is a glycosylation site (N-linked (GlcNAc...) asparagine). Residue asparagine 288 is glycosylated (N-linked (GlcNAc...) asparagine). Asparagine 323, asparagine 329, asparagine 342, and asparagine 366 each carry an N-linked (GlcNAc...) asparagine glycan. LRR repeat units follow at residues 345 to 368 (QLEY…ANLS), 370 to 392 (TLTS…IGNL), 394 to 416 (SLQE…FGKL), 418 to 440 (NLQV…FGNM), 442 to 464 (RLQK…LGRC), 466 to 487 (YLLD…EILQ), 490 to 512 (SLAY…VGKL), 514 to 536 (LLVG…IGGC), 538 to 560 (SMEF…SRLV), 561 to 584 (SLKN…ASLP), and 585 to 597 (SLRN…NKFE). Asparagine 439 is a glycosylation site (N-linked (GlcNAc...) asparagine). Residue asparagine 478 is glycosylated (N-linked (GlcNAc...) asparagine). N-linked (GlcNAc...) asparagine glycans are attached at residues asparagine 571, asparagine 590, and asparagine 608. A helical transmembrane segment spans residues 654 to 674 (ICIGIASLLLIIIVASLCWFM). Residues 675–1031 (KRKKKNNASD…WMLNTDMHTM (357 aa)) lie on the Cytoplasmic side of the membrane. Phosphothreonine is present on threonine 709. The Protein kinase domain occupies 712–1001 (FSSTNLIGSG…ELISIRSKFF (290 aa)). ATP is bound by residues 718–726 (IGSGNFGNV) and lysine 741. Phosphotyrosine is present on residues tyrosine 791 and tyrosine 836. The active-site Proton acceptor is the aspartate 849. Tyrosine 897 carries the post-translational modification Phosphotyrosine. Polar residues predominate over residues 1005–1020 (TTITESPRDAPQSSPQ). Positions 1005-1031 (TTITESPRDAPQSSPQEWMLNTDMHTM) are disordered.

It belongs to the protein kinase superfamily. Ser/Thr protein kinase family. Binds to Pseudomonas syringae AvrPto1 and (via the kinase and cytoplasmic domains) to hopD2. Interacts with SERK3/BAK1, SERK4/BKK1, SERK1 and SERK2 in a specific ligand-induced manner. Binds to IOS1. Binds to BIK1 in the absence of pathogen elicitor; dissociates upon pathogen-associated molecular pattern (PAMP)-triggered activation. Autophosphorylated after elicitation with elfl18. Autophosphorylation is inhibited by the binding with avrPto1. Phosphorylation at T-836 is required for immune signaling. In terms of processing, polyubiquitinated at the kinase domain mediated by P.syringae AvrPtoB.

It localises to the cell membrane. The protein resides in the endomembrane system. The catalysed reaction is L-seryl-[protein] + ATP = O-phospho-L-seryl-[protein] + ADP + H(+). The enzyme catalyses L-threonyl-[protein] + ATP = O-phospho-L-threonyl-[protein] + ADP + H(+). Its function is as follows. Constitutes the pattern-recognition receptor (PPR) that determines the specific perception of elongation factor Tu (EF-Tu), a potent elicitor of the defense response to pathogen-associated molecular patterns (PAMPs); phosphorylates BIK1 upon elicitation to regulate immune responses such as defense hormone expression (e.g. jasmonic acid (JA) and salicylic acid (SA)). Reduces transformation by Rhizobium radiobacter probably by inducing plant defense during the interaction. Binding to the effector AvrPto1 from P.syringae blocks the downstream plant immune response while interaction with hopD2 decreases the phosphorylation level of EFR upon elf18 treatment. Specific endoplasmic reticulum quality control components (ERD2B, CRT3, UGGT and STT3A) are required for the biogenesis of EFR. This is LRR receptor-like serine/threonine-protein kinase EFR from Arabidopsis thaliana (Mouse-ear cress).